We begin with the raw amino-acid sequence, 310 residues long: tRNA-cytidine(32) 2-sulfurtransferase (310 aa).

A PP-loop motif motif is present at residues 45–50; it reads SGGKDS. Cys120, Cys123, and Cys211 together coordinate [4Fe-4S] cluster.

It belongs to the TtcA family. In terms of assembly, homodimer. Mg(2+) serves as cofactor. It depends on [4Fe-4S] cluster as a cofactor.

The protein localises to the cytoplasm. It carries out the reaction cytidine(32) in tRNA + S-sulfanyl-L-cysteinyl-[cysteine desulfurase] + AH2 + ATP = 2-thiocytidine(32) in tRNA + L-cysteinyl-[cysteine desulfurase] + A + AMP + diphosphate + H(+). It functions in the pathway tRNA modification. Its function is as follows. Catalyzes the ATP-dependent 2-thiolation of cytidine in position 32 of tRNA, to form 2-thiocytidine (s(2)C32). The sulfur atoms are provided by the cysteine/cysteine desulfurase (IscS) system. The protein is tRNA-cytidine(32) 2-sulfurtransferase of Shewanella oneidensis (strain ATCC 700550 / JCM 31522 / CIP 106686 / LMG 19005 / NCIMB 14063 / MR-1).